We begin with the raw amino-acid sequence, 468 residues long: 3-isopropylmalate dehydratase large subunit (468 aa).

[4Fe-4S] cluster is bound by residues cysteine 349, cysteine 409, and cysteine 412.

This sequence belongs to the aconitase/IPM isomerase family. LeuC type 1 subfamily. Heterodimer of LeuC and LeuD. The cofactor is [4Fe-4S] cluster.

It catalyses the reaction (2R,3S)-3-isopropylmalate = (2S)-2-isopropylmalate. It functions in the pathway amino-acid biosynthesis; L-leucine biosynthesis; L-leucine from 3-methyl-2-oxobutanoate: step 2/4. Its function is as follows. Catalyzes the isomerization between 2-isopropylmalate and 3-isopropylmalate, via the formation of 2-isopropylmaleate. In Ruegeria pomeroyi (strain ATCC 700808 / DSM 15171 / DSS-3) (Silicibacter pomeroyi), this protein is 3-isopropylmalate dehydratase large subunit.